The primary structure comprises 290 residues: Inositol monophosphatase 2 (290 aa).

The Mg(2+) site is built by glutamate 83, aspartate 103, isoleucine 105, and aspartate 106. Residue glutamate 83 participates in substrate binding. Substrate contacts are provided by residues 105–108, 207–209, glutamine 226, and aspartate 233; these read IDGT and GSS. Mg(2+) is bound at residue aspartate 233.

It belongs to the inositol monophosphatase superfamily. In terms of assembly, homodimer. Mg(2+) is required as a cofactor.

The protein resides in the cytoplasm. The catalysed reaction is a myo-inositol phosphate + H2O = myo-inositol + phosphate. It functions in the pathway polyol metabolism; myo-inositol biosynthesis; myo-inositol from D-glucose 6-phosphate: step 2/2. Can use myo-inositol monophosphates, scylloinositol 1,4-diphosphate, glucose-1-phosphate, beta-glycerophosphate, and 2'-AMP as substrates. Has been implicated as the pharmacological target for lithium Li(+) action in brain. In Rattus norvegicus (Rat), this protein is Inositol monophosphatase 2 (Impa2).